The primary structure comprises 432 residues: Pachytene checkpoint protein 2 homolog (432 aa).

Met1 is subject to N-acetylmethionine. 179–186 (GPPGTGKT) contacts ATP.

Belongs to the AAA ATPase family. PCH2 subfamily. In terms of assembly, specifically interacts with the ligand binding domain of the thyroid receptor (TR). This interaction does not require the presence of thyroid hormone for its interaction. Interacts with proteasome subunit PSMA8; to participate in meiosis progression during spermatogenesis. Widely expressed, including in testis.

Functionally, plays a key role in chromosome recombination and chromosome structure development during meiosis. Required at early steps in meiotic recombination that leads to non-crossovers pathways. Also needed for efficient completion of homologous synapsis by influencing crossover distribution along the chromosomes affecting both crossovers and non-crossovers pathways. Also required for development of higher-order chromosome structures and is needed for synaptonemal-complex formation. In males, required for efficient synapsis of the sex chromosomes and for sex body formation. Promotes early steps of the DNA double-strand breaks (DSBs) repair process upstream of the assembly of RAD51 complexes. Required for depletion of HORMAD1 and HORMAD2 from synapsed chromosomes. Plays a role in mitotic spindle assembly checkpoint (SAC) activation. The polypeptide is Pachytene checkpoint protein 2 homolog (Trip13) (Mus musculus (Mouse)).